A 396-amino-acid polypeptide reads, in one-letter code: S-adenosylmethionine synthase (396 aa).

His-16 lines the ATP pocket. A Mg(2+)-binding site is contributed by Asp-18. Glu-44 is a binding site for K(+). L-methionine is bound by residues Glu-57 and Gln-100. The tract at residues 100-110 is flexible loop; that stretch reads QSPDINQGVDR. ATP contacts are provided by residues 165–167, Asp-240, 246–247, Ala-263, and Lys-267; these read DAK and RK. Asp-240 provides a ligand contact to L-methionine. An L-methionine-binding site is contributed by Lys-271.

Belongs to the AdoMet synthase family. In terms of assembly, homotetramer; dimer of dimers. It depends on Mg(2+) as a cofactor. The cofactor is K(+).

It is found in the cytoplasm. The catalysed reaction is L-methionine + ATP + H2O = S-adenosyl-L-methionine + phosphate + diphosphate. Its pathway is amino-acid biosynthesis; S-adenosyl-L-methionine biosynthesis; S-adenosyl-L-methionine from L-methionine: step 1/1. Functionally, catalyzes the formation of S-adenosylmethionine (AdoMet) from methionine and ATP. The overall synthetic reaction is composed of two sequential steps, AdoMet formation and the subsequent tripolyphosphate hydrolysis which occurs prior to release of AdoMet from the enzyme. The sequence is that of S-adenosylmethionine synthase from Pseudomonas fluorescens (strain Pf0-1).